The primary structure comprises 195 residues: Inner membrane protein YohC (195 aa).

Residues 1-32 (MSHVWGLFSHPDREMQVINRENETISHHYTHH) are Cytoplasmic-facing. A helical transmembrane segment spans residues 33–55 (VLLMAAIPVICAFIGTTQIGWNF). Topologically, residues 56-64 (GDGTILKLS) are periplasmic. A helical membrane pass occupies residues 65–87 (WFTGLALAVLFYGVMLAGVAVMG). Residues 88-107 (RVIWWMARNYPQRPSLAHCM) lie on the Cytoplasmic side of the membrane. The helical transmembrane segment at 108–130 (VFAGYVATPLFLSGLVALYPLVW) threads the bilayer. The Periplasmic portion of the chain corresponds to 131–134 (LCAL). Residues 135–157 (VGTVALFYTGYLLYLGIPSFLNI) traverse the membrane as a helical segment. At 158–169 (NKEEGLSFSSST) the chain is on the cytoplasmic side. Residues 170 to 192 (LAIGVLVLEVLLALTVILWGYGY) traverse the membrane as a helical segment. Residues 193–195 (RLF) are Periplasmic-facing.

Its subcellular location is the cell inner membrane. This is Inner membrane protein YohC (yohC) from Escherichia coli O6:H1 (strain CFT073 / ATCC 700928 / UPEC).